Reading from the N-terminus, the 224-residue chain is Ribonuclease HII (224 aa).

The 210-residue stretch at 1–210 (MKLGGIDEAG…LKKIEEKLQK (210 aa)) folds into the RNase H type-2 domain. The a divalent metal cation site is built by Asp7, Glu8, and Asp105.

This sequence belongs to the RNase HII family. It depends on Mn(2+) as a cofactor. The cofactor is Mg(2+).

The protein resides in the cytoplasm. It carries out the reaction Endonucleolytic cleavage to 5'-phosphomonoester.. Endonuclease that specifically degrades the RNA of RNA-DNA hybrids. The polypeptide is Ribonuclease HII (Thermococcus sibiricus (strain DSM 12597 / MM 739)).